A 410-amino-acid chain; its full sequence is Toluene 1,2-dioxygenase system ferredoxin--NAD(+) reductase component (410 aa).

4-35 contacts FAD; the sequence is HVAIIGNGVGGFTTAQALRAEGFEGRISLIGD. An NAD(+)-binding site is contributed by 145–173; it reads RLLIVGGGLIGCEVATTARKLGLSVTILE.

Belongs to the bacterial ring-hydroxylating dioxygenase ferredoxin reductase family. This dioxygenase system consists of four proteins: the two subunits of the hydroxylase component (todC1 and todC2), a ferredoxin (TodB) and a ferredoxin reductase (TodA). FAD is required as a cofactor.

The enzyme catalyses 2 reduced [2Fe-2S]-[ferredoxin] + NAD(+) + H(+) = 2 oxidized [2Fe-2S]-[ferredoxin] + NADH. It participates in xenobiotic degradation; toluene degradation. Functionally, part of the electron transfer component of toluene 1,2-dioxygenase, transfers electrons from ferredoxin (TodB) to NADH. The protein is Toluene 1,2-dioxygenase system ferredoxin--NAD(+) reductase component (todA) of Pseudomonas putida (strain ATCC 700007 / DSM 6899 / JCM 31910 / BCRC 17059 / LMG 24140 / F1).